The following is a 261-amino-acid chain: Small ribosomal subunit protein uS2 (261 aa).

The interval 224 to 261 (GRQGEDDEAVQQEEVAEGVSKDSLEDLKKTVEEGSNEE) is disordered. Positions 228-239 (EDDEAVQQEEVA) are enriched in acidic residues. Residues 242 to 255 (VSKDSLEDLKKTVE) show a composition bias toward basic and acidic residues.

The protein belongs to the universal ribosomal protein uS2 family.

This chain is Small ribosomal subunit protein uS2 (rpsB), found in Pediococcus acidilactici.